The following is a 1380-amino-acid chain: Inverted formin-2 (1380 aa).

A GBD/FH3 domain is found at 1-330 (MSLKEGAHTK…RAVLLADDCQ (330 aa)). Disordered stretches follow at residues 341–391 (LVTS…SGIP) and 440–541 (ISTS…PPPL). The segment covering 343 to 352 (TSKKHPSKEK) has biased composition (basic residues). Basic and acidic residues predominate over residues 367–385 (QTDKPKDESCEEKTVKKDP). One can recognise an FH1 domain in the interval 432-592 (VVSNAIDRIS…DYSLGYLPKA (161 aa)). 2 stretches are compositionally biased toward pro residues: residues 446–470 (LPPP…PPLP) and 478–541 (TPPP…PPPL). The FH2 domain occupies 593–981 (YFKVNKPTLK…AEKRKKQLAD (389 aa)). 2 coiled-coil regions span residues 879-930 (LKKL…KLAD) and 956-991 (LKAK…KGEN). Positions 1009 to 1024 (DALLADIKKGFQLRKT) constitute a WH2 domain. Disordered stretches follow at residues 1026 to 1049 (KTKT…DGTD), 1188 to 1244 (HKER…LSEA), and 1260 to 1380 (FQSS…CVVQ). 3 stretches are compositionally biased toward polar residues: residues 1206–1244 (GTES…LSEA), 1260–1284 (FQSS…QAQR), and 1294–1303 (TRDTTVTEGS). The span at 1306 to 1322 (EEDKCNDEGYPEHKTMG) shows a compositional bias: basic and acidic residues. A compositionally biased stretch (low complexity) spans 1328–1339 (SSSHSTTLQQSS). The segment covering 1345 to 1359 (VKRGSSKHKKKRRSS) has biased composition (basic residues).

It belongs to the formin homology family.

This is Inverted formin-2 (inf2) from Xenopus tropicalis (Western clawed frog).